The sequence spans 111 residues: Small ribosomal subunit protein bS6 (111 aa).

The protein belongs to the bacterial ribosomal protein bS6 family.

Binds together with bS18 to 16S ribosomal RNA. The polypeptide is Small ribosomal subunit protein bS6 (Francisella tularensis subsp. tularensis (strain FSC 198)).